The following is a 553-amino-acid chain: Transcription factor 7-like 1 (553 aa).

Gly residues predominate over residues 1–11 (MPQLNSGGGDE). Residues 1-61 (MPQLNSGGGD…SENHSSDSDS (61 aa)) are interaction with CTNNB1. Disordered stretches follow at residues 1 to 77 (MPQL…EKPR), 183 to 213 (GTPP…PYYP), and 392 to 474 (SARD…LTTK). Composition is skewed to basic and acidic residues over residues 17-32 (ELIR…EKSP) and 52-77 (SENH…EKPR). The segment at 109–312 (LGGHYLPNGA…SPNLITKPSV (204 aa)) is interaction with AES and TLE4. The HMG box DNA-binding region spans 324–392 (IKKPLNAFML…LHSQLYPTWS (69 aa)). Over residues 407 to 416 (KQSPEMEITK) the composition is skewed to basic and acidic residues. Residues 408-553 (QSPEMEITKT…PLSLVTKSSD (146 aa)) form an interaction with CTBP region. Residues 444-463 (SPATPSAALASPAAPAATHS) show a composition bias toward low complexity. The span at 464–473 (EQAQPLSLTT) shows a compositional bias: polar residues.

It belongs to the TCF/LEF family. As to quaternary structure, interacts with csnk1e, ctnnb1, ctbp, dact1 and gsk3b. May interact with ase and tle4. Post-translationally, phosphorylated. Phosphorylation by csnk1e promotes binding to ctnnb1 while phosphorylation by gsk3b may reverse this effect.

Its subcellular location is the nucleus. Its function is as follows. Participates in the Wnt signaling pathway. Binds to DNA and acts as a repressor in the absence of ctnnb1, and as an activator in its presence. Required early in development for the establishment of the dorsal body axis in response to maternal Wnt signaling. This is Transcription factor 7-like 1 (tcf7l1) from Xenopus tropicalis (Western clawed frog).